A 359-amino-acid polypeptide reads, in one-letter code: MVNNRNEIEVRKLEHIFLCSYCNVEYEKTTLLEDIELIHKGTCGINFNDIETEIELFGKKLSAPIIVSGMTGGHSKAKEINKNIAKAVEELGLGMGVGSQRAAIVNDELIDTYSIVRDYTNNLVIGNLGAVNFIVDDWDEEIIDKAIEMIDADAIAIHFNPLQEIIQPEGDLNFKNLYKLKEIISNYKKSYKNIPFIAKQVGEGFSKEDALILKDIGFDAIDVQGSGGTSWAKVEIYRVKEEEIKRLAEKFANWGIPTAASIFEVKSVYDGIVIGSGGIRGGLDIAKCIAIGCDCCSVALPILKASLKGWEEVVKVLESYIKELKIAMFLVGAENIEELKKTSYIVKGTLKEWISQRLK.

11–12 (RK) is a binding site for substrate. Residues Ser-68, 69–71 (GMT), Ser-99, and Asn-127 contribute to the FMN site. Residue 99 to 101 (SQR) coordinates substrate. Gln-163 is a binding site for substrate. Glu-164 lines the Mg(2+) pocket. Residues Lys-199, Thr-229, 278–280 (GIR), and 299–300 (AL) contribute to the FMN site.

This sequence belongs to the IPP isomerase type 2 family. In terms of assembly, homooctamer. Dimer of tetramers. Requires FMN as cofactor. NADPH serves as cofactor. Mg(2+) is required as a cofactor.

The protein localises to the cytoplasm. It carries out the reaction isopentenyl diphosphate = dimethylallyl diphosphate. With respect to regulation, inhibited by 3,4-epoxy-3-methylbutyl diphosphate (EIPP). Involved in the biosynthesis of isoprenoids. Catalyzes the 1,3-allylic rearrangement of the homoallylic substrate isopentenyl (IPP) to its allylic isomer, dimethylallyl diphosphate (DMAPP). This Methanocaldococcus jannaschii (strain ATCC 43067 / DSM 2661 / JAL-1 / JCM 10045 / NBRC 100440) (Methanococcus jannaschii) protein is Isopentenyl-diphosphate delta-isomerase.